We begin with the raw amino-acid sequence, 521 residues long: Ribonuclease Y (521 aa).

Residues 5 to 25 (MMTMILAVIAAAIGFLIGNLL) traverse the membrane as a helical segment. The KH domain occupies 211–271 (TVSVVALPSD…VRREVAKLSL (61 aa)). The HD domain occupies 337–430 (VYQHSLEVAF…VQAADALSGA (94 aa)).

It belongs to the RNase Y family.

It localises to the cell membrane. Its function is as follows. Endoribonuclease that initiates mRNA decay. The protein is Ribonuclease Y of Geotalea uraniireducens (strain Rf4) (Geobacter uraniireducens).